Consider the following 452-residue polypeptide: UDP-N-acetylmuramate--L-alanine ligase (452 aa).

Residue 121–127 (GTHGKTT) participates in ATP binding.

It belongs to the MurCDEF family.

Its subcellular location is the cytoplasm. It carries out the reaction UDP-N-acetyl-alpha-D-muramate + L-alanine + ATP = UDP-N-acetyl-alpha-D-muramoyl-L-alanine + ADP + phosphate + H(+). The protein operates within cell wall biogenesis; peptidoglycan biosynthesis. Its function is as follows. Cell wall formation. This chain is UDP-N-acetylmuramate--L-alanine ligase, found in Christiangramia forsetii (strain DSM 17595 / CGMCC 1.15422 / KT0803) (Gramella forsetii).